The following is a 441-amino-acid chain: G-protein coupled receptor family C group 5 member C (441 aa).

The signal sequence occupies residues 1–22 (MATHKTLLMCLGLPLFFPGALA). The Extracellular portion of the chain corresponds to 23–49 (QNHAPPGCSPDLDPLYYNLCDRSGAWG). The chain crosses the membrane as a helical span at residues 50-70 (IVLEAVAGAGIITTFVLTIIL). The Cytoplasmic segment spans residues 71–84 (VASLPFVQDTKKRS). The chain crosses the membrane as a helical span at residues 85-105 (LLGTQVFFLLGTLGLFCLVFA). The Extracellular portion of the chain corresponds to 106–119 (CVVKPDFSTCASRR). The chain crosses the membrane as a helical span at residues 120 to 140 (FLFGVLFAICFSCLIAHTLSL). Residues 141 to 154 (NFLARKNHGPRGWV) lie on the Cytoplasmic side of the membrane. Residues 155 to 175 (IFTVALLLTLVEVIINTEWLI) traverse the membrane as a helical segment. At 176 to 207 (ITLVRGGGQVSTPGNGSADWTVTSPCAIANMD) the chain is on the extracellular side. N190 carries N-linked (GlcNAc...) asparagine glycosylation. A helical transmembrane segment spans residues 208 to 228 (FVMALIYVMLLLLAAFLGAWP). Residues 229–240 (TLCGRFKRWRKH) lie on the Cytoplasmic side of the membrane. A helical transmembrane segment spans residues 241–261 (GVFVLLTTATSIAIWVVWIVM). Residues 262–278 (YTYGNKQHHSPTWDDPT) lie on the Extracellular side of the membrane. The chain crosses the membrane as a helical span at residues 279-299 (LAIALAANAWTFVFFYVIPEV). The Cytoplasmic segment spans residues 300 to 441 (SQVTKPSPEQ…DQSPKNKTRW (142 aa)). S343, S382, S402, and S405 each carry phosphoserine. The residue at position 413 (Y413) is a Phosphotyrosine. Residues 419–441 (QVATPTKDGKISQDQSPKNKTRW) form a disordered region. T422 is modified (phosphothreonine). The segment covering 430–441 (SQDQSPKNKTRW) has biased composition (polar residues). S434 is subject to Phosphoserine.

The protein belongs to the G-protein coupled receptor 3 family.

It localises to the cell membrane. Its function is as follows. This retinoic acid-inducible G-protein coupled receptor provide evidence for a possible interaction between retinoid and G-protein signaling pathways. The polypeptide is G-protein coupled receptor family C group 5 member C (Gprc5c) (Rattus norvegicus (Rat)).